A 464-amino-acid chain; its full sequence is ATP-dependent protease ATPase subunit HslU (464 aa).

Residues Val18, 60 to 65 (GVGKTE), Asp277, Glu342, and Arg414 each bind ATP.

Belongs to the ClpX chaperone family. HslU subfamily. A double ring-shaped homohexamer of HslV is capped on each side by a ring-shaped HslU homohexamer. The assembly of the HslU/HslV complex is dependent on binding of ATP.

The protein localises to the cytoplasm. ATPase subunit of a proteasome-like degradation complex; this subunit has chaperone activity. The binding of ATP and its subsequent hydrolysis by HslU are essential for unfolding of protein substrates subsequently hydrolyzed by HslV. HslU recognizes the N-terminal part of its protein substrates and unfolds these before they are guided to HslV for hydrolysis. The polypeptide is ATP-dependent protease ATPase subunit HslU (Lactobacillus leichmannii).